Here is a 535-residue protein sequence, read N- to C-terminus: Probable monogalactosyldiacylglycerol synthase, chloroplastic (535 aa).

The transit peptide at M1–G113 directs the protein to the chloroplast.

Belongs to the glycosyltransferase 28 family.

It is found in the plastid. Its subcellular location is the chloroplast membrane. The enzyme catalyses a 1,2-diacyl-sn-glycerol + UDP-alpha-D-galactose = a 1,2-diacyl-3-O-(beta-D-galactosyl)-sn-glycerol + UDP + H(+). In terms of biological role, involved in the synthesis of the major structural component of photosynthetic membranes. The protein is Probable monogalactosyldiacylglycerol synthase, chloroplastic (MGD A) of Nicotiana tabacum (Common tobacco).